An 877-amino-acid chain; its full sequence is Phosphoenolpyruvate carboxylase (877 aa).

Catalysis depends on residues His-138 and Lys-543.

The protein belongs to the PEPCase type 1 family. Mg(2+) is required as a cofactor.

It carries out the reaction oxaloacetate + phosphate = phosphoenolpyruvate + hydrogencarbonate. Functionally, forms oxaloacetate, a four-carbon dicarboxylic acid source for the tricarboxylic acid cycle. In Aeromonas salmonicida (strain A449), this protein is Phosphoenolpyruvate carboxylase.